A 219-amino-acid polypeptide reads, in one-letter code: MGQKVNPVGLRVGVIRDWESKWYAEKDYADLLHEDIKIREYIENRLKDASVSKIEIERAANRVNITISTAKPGMVIGKGGSEVEALRKALNELTGKRVHINIFEVKQADLDAKLVAENIARQLENRISFRRAMKQAIQRTMRAGAQGIKTQVSGRLGGADIARAEHYSEGTVPLHTLRADIDYGTAEADTTYGKLGVKIWIYRGEVLPTKGKNKKEGGN.

In terms of domain architecture, KH type-2 spans 38–106; sequence IREYIENRLK…RVHINIFEVK (69 aa).

Belongs to the universal ribosomal protein uS3 family. In terms of assembly, part of the 30S ribosomal subunit. Forms a tight complex with proteins S10 and S14.

Its function is as follows. Binds the lower part of the 30S subunit head. Binds mRNA in the 70S ribosome, positioning it for translation. The sequence is that of Small ribosomal subunit protein uS3 from Halalkalibacterium halodurans (strain ATCC BAA-125 / DSM 18197 / FERM 7344 / JCM 9153 / C-125) (Bacillus halodurans).